The following is a 722-amino-acid chain: Metal transporter cnnm-5 (722 aa).

A signal peptide spans 1–17 (MSLFLFAIFQLALGSPG). At 18–139 (APNGPNVPLQ…AAAAKYMGDE (122 aa)) the chain is on the extracellular side. Residues asparagine 102 and asparagine 114 are each glycosylated (N-linked (GlcNAc...) asparagine). The CNNM transmembrane domain occupies 132–318 (AAKYMGDEIV…AQNEREKTIL (187 aa)). A helical membrane pass occupies residues 140–160 (IVFCFFCILMSAYASGMTLGY). Residues 161–196 (MKFSMIDLNTMLKIAEGDAAKKRVRRIMHFRRRSTQ) lie on the Cytoplasmic side of the membrane. Residues 197-217 (LVVTFSLFSSVFTVLFTTTCE) traverse the membrane as a helical segment. At 218-227 (KMLHGVSNED) the chain is on the extracellular side. The chain crosses the membrane as a helical span at residues 228–248 (VLKMAVPALICLIFAEMIPQA). Topologically, residues 249 to 257 (VCNSKFGFN) are cytoplasmic. The chain crosses the membrane as a helical span at residues 258–278 (LAASLWFVTVIIFFVTLPIAY). The Extracellular segment spans residues 279 to 722 (PASLVLGRFL…ETTPFMEKQE (444 aa)). Residues asparagine 320, asparagine 349, and asparagine 371 are each glycosylated (N-linked (GlcNAc...) asparagine). 2 consecutive CBS domains span residues 333 to 396 (MVPI…LIDE) and 413 to 473 (TVKF…KIDE). Residues 584-607 (SQRSSSTVNSQQHRQQTTDNSRST) are disordered. Residue asparagine 639 is glycosylated (N-linked (GlcNAc...) asparagine). Positions 686–722 (LNSRASTSTSTTPACRTPLSVDARSQDETTPFMEKQE) are disordered. A compositionally biased stretch (low complexity) spans 688 to 703 (SRASTSTSTTPACRTP).

The protein belongs to the ACDP family.

It is found in the cell membrane. In terms of biological role, probable metal transporter. Probably acts redundantly with the other metal transport proteins cnnm-1, cnnm-2, cnnm-3 and cnnm-4 to regulate Mg(2+) homeostasis. This chain is Metal transporter cnnm-5, found in Caenorhabditis elegans.